Consider the following 448-residue polypeptide: Methylenetetrahydrofolate--tRNA-(uracil-5-)-methyltransferase TrmFO (448 aa).

FAD is bound at residue Gly10–Gly15.

The protein belongs to the MnmG family. TrmFO subfamily. It depends on FAD as a cofactor.

It localises to the cytoplasm. It carries out the reaction uridine(54) in tRNA + (6R)-5,10-methylene-5,6,7,8-tetrahydrofolate + NADH + H(+) = 5-methyluridine(54) in tRNA + (6S)-5,6,7,8-tetrahydrofolate + NAD(+). It catalyses the reaction uridine(54) in tRNA + (6R)-5,10-methylene-5,6,7,8-tetrahydrofolate + NADPH + H(+) = 5-methyluridine(54) in tRNA + (6S)-5,6,7,8-tetrahydrofolate + NADP(+). Its function is as follows. Catalyzes the folate-dependent formation of 5-methyl-uridine at position 54 (M-5-U54) in all tRNAs. The sequence is that of Methylenetetrahydrofolate--tRNA-(uracil-5-)-methyltransferase TrmFO from Lactococcus lactis subsp. cremoris (strain SK11).